Reading from the N-terminus, the 126-residue chain is Glycine cleavage system H protein (126 aa).

Residues Thr24–Lys105 enclose the Lipoyl-binding domain. Lys65 bears the N6-lipoyllysine mark.

It belongs to the GcvH family. In terms of assembly, the glycine cleavage system is composed of four proteins: P, T, L and H. It depends on (R)-lipoate as a cofactor.

The glycine cleavage system catalyzes the degradation of glycine. The H protein shuttles the methylamine group of glycine from the P protein to the T protein. This is Glycine cleavage system H protein from Burkholderia cenocepacia (strain HI2424).